Consider the following 379-residue polypeptide: Class V chitinase CHIT5b (379 aa).

Positions 1 to 26 (MANILNLKHLLTLALILLALATKSST) are cleaved as a signal peptide. The GH18 domain occupies 34–379 (RVKGIYWLEN…TQASKAWKLV (346 aa)). 3 N-linked (GlcNAc...) asparagine glycosylation sites follow: asparagine 68, asparagine 109, and asparagine 128. Glutamate 147 (proton donor) is an active-site residue. N-linked (GlcNAc...) asparagine glycans are attached at residues asparagine 192, asparagine 227, and asparagine 241.

It belongs to the glycosyl hydrolase 18 family. Chitinase class V subfamily.

It carries out the reaction Random endo-hydrolysis of N-acetyl-beta-D-glucosaminide (1-&gt;4)-beta-linkages in chitin and chitodextrins.. Its pathway is glycan degradation; chitin degradation. Possesses chitinase activity in vitro toward glycol chitin, carboxymethyl-chitin, colloidal chitin, and the chitin oligosaccharides (N-acetylglucosamine) (GlcNAc)6 and (GlcNAc)5. Hydrolyzes (GlcNAc)6 into (GlcNAc)4 and (GlcNAc)2, or two (GlcNAc)3 molecules. Has the capacity to reduce hyphal growth of the fungus Trichoderma viride in an agar-plate bioassay. This chain is Class V chitinase CHIT5b, found in Medicago truncatula (Barrel medic).